We begin with the raw amino-acid sequence, 437 residues long: MRTKSLKKNKINVITLGCSKNVYDSEVLMGQLRANGKEVTHEATAKDEGNIIVINTCGFIDNAKAESVNMILEYADKKDKGLVDKVFVTGCLSERYRPDLEKEIPNVDQYFGTTELPQLLKALGADYKHELLGERLTTTPKNYAYLKIAEGCDRPCSFCAIPLMRGSHVSQPIEKLVKEAQGLAKNGVKELILIAQDLTYYGLDLYKKRNLAELLEALAAVEGIEWIRLHYAYPTGFPMDVLELMKREPKICNYIDIPLQHISDSILKSMRRGTTQAKTTQLLKDFRAAVPGMAIRTTLIVGYPGETQEDFEILKEFVQEMKFDRMGCFAYSHEENTHAYLLEDDVPDDVKQARANEIMELQSQISWDLNQEKVGQVFRCIIDRKEGAHFVGRTEFDSPDVDNEVLIDASKHYVKTGEFVNIKIIEATEFDLYGEPA.

The 120-residue stretch at 9–128 (NKINVITLGC…LLKALGADYK (120 aa)) folds into the MTTase N-terminal domain. [4Fe-4S] cluster is bound by residues cysteine 18, cysteine 57, cysteine 91, cysteine 152, cysteine 156, and cysteine 159. The Radical SAM core domain maps to 138-368 (TTPKNYAYLK…MELQSQISWD (231 aa)). The region spanning 371–437 (QEKVGQVFRC…TEFDLYGEPA (67 aa)) is the TRAM domain.

It belongs to the methylthiotransferase family. RimO subfamily. The cofactor is [4Fe-4S] cluster.

The protein resides in the cytoplasm. It catalyses the reaction L-aspartate(89)-[ribosomal protein uS12]-hydrogen + (sulfur carrier)-SH + AH2 + 2 S-adenosyl-L-methionine = 3-methylsulfanyl-L-aspartate(89)-[ribosomal protein uS12]-hydrogen + (sulfur carrier)-H + 5'-deoxyadenosine + L-methionine + A + S-adenosyl-L-homocysteine + 2 H(+). Catalyzes the methylthiolation of an aspartic acid residue of ribosomal protein uS12. The protein is Ribosomal protein uS12 methylthiotransferase RimO of Flavobacterium johnsoniae (strain ATCC 17061 / DSM 2064 / JCM 8514 / BCRC 14874 / CCUG 350202 / NBRC 14942 / NCIMB 11054 / UW101) (Cytophaga johnsonae).